The sequence spans 84 residues: Beta-toxin Ct16 (84 aa).

The N-terminal stretch at 1-19 (MNYFILLFVATFLLLDVNC) is a signal peptide. One can recognise an LCN-type CS-alpha/beta domain in the interval 21–80 (KDGYPVDANNCKFECWKNEYCDELCKAKRAESGYCYKLKLSCWCEGLPDDEPTKTSDRCY). Cystine bridges form between Cys-31/Cys-79, Cys-35/Cys-55, Cys-41/Cys-62, and Cys-45/Cys-64. The residue at position 82 (Thr-82) is a Threonine amide.

It belongs to the long (4 C-C) scorpion toxin superfamily. Sodium channel inhibitor family. Alpha subfamily. In terms of tissue distribution, expressed by the venom gland.

Its subcellular location is the secreted. Functionally, alpha toxins bind voltage-independently at site-3 of sodium channels (Nav) and inhibit the inactivation of the activated channels, thereby blocking neuronal transmission. Is possibly toxic to mice. The sequence is that of Beta-toxin Ct16 from Centruroides tecomanus (Scorpion).